Consider the following 92-residue polypeptide: MARSLKKAPFVANHLLEKVERLNTQGDKKVIKTWSRSSTIVPLMIGHTIAVHNGREHIPVFITDQMVGHKLGEFAPTRTFRGHVKKDKKSKR.

The protein belongs to the universal ribosomal protein uS19 family.

It localises to the plastid. The protein localises to the chloroplast. Its function is as follows. Protein S19 forms a complex with S13 that binds strongly to the 16S ribosomal RNA. This chain is Small ribosomal subunit protein uS19c (rps19), found in Chlorella vulgaris (Green alga).